Consider the following 88-residue polypeptide: Apolipoprotein C-I (88 aa).

The first 26 residues, 1-26 (MRLFLSLPVLVVVLAMVLEGPAPTQA), serve as a signal peptide directing secretion.

The protein belongs to the apolipoprotein C1 family.

It is found in the secreted. In terms of biological role, inhibitor of lipoprotein binding to the low density lipoprotein (LDL) receptor, LDL receptor-related protein, and very low density lipoprotein (VLDL) receptor. Associates with high density lipoproteins (HDL) and the triacylglycerol-rich lipoproteins in the plasma and makes up about 10% of the protein of the VLDL and 2% of that of HDL. Appears to interfere directly with fatty acid uptake and is also the major plasma inhibitor of cholesteryl ester transfer protein (CETP). Binds free fatty acids and reduces their intracellular esterification. Modulates the interaction of APOE with beta-migrating VLDL and inhibits binding of beta-VLDL to the LDL receptor-related protein. This chain is Apolipoprotein C-I (APOC1), found in Leptonychotes weddellii (Weddell seal).